The primary structure comprises 294 residues: GTPase Era (294 aa).

The Era-type G domain occupies 3–170 (KSGFISIIGR…LELMIKYMPE (168 aa)). The tract at residues 11–18 (GRPNVGKS) is G1. GTP is bound at residue 11-18 (GRPNVGKS). The G2 stretch occupies residues 37–41 (QTTRN). A G3 region spans residues 58–61 (DTPG). GTP contacts are provided by residues 58-62 (DTPGI) and 120-123 (NKID). A G4 region spans residues 120–123 (NKID). Positions 149 to 151 (ISA) are G5. Residues 201–278 (LSEEVPHGIA…NLKVWVKVKK (78 aa)) form the KH type-2 domain.

It belongs to the TRAFAC class TrmE-Era-EngA-EngB-Septin-like GTPase superfamily. Era GTPase family. Monomer.

The protein localises to the cytoplasm. It localises to the cell membrane. Functionally, an essential GTPase that binds both GDP and GTP, with rapid nucleotide exchange. Plays a role in 16S rRNA processing and 30S ribosomal subunit biogenesis and possibly also in cell cycle regulation and energy metabolism. This chain is GTPase Era, found in Clostridium novyi (strain NT).